A 162-amino-acid polypeptide reads, in one-letter code: MAWGLPCHQNTAGANPHLFLGCYSTSSLQGLEYGGQRGDAHGKPGVLHGELEPHDHTSRLERHDLHSQLPTSVQVRHHWWEGALDLAKKRQQQTSINVFTTIKQGSRCDRWMVLGAISLLYNQEEAPDDRPLRARREVRSQHLSWAFPGTAGPGLVCAGDSQ.

This is an uncharacterized protein from Homo sapiens (Human).